The primary structure comprises 91 residues: PqqA binding protein 1 (91 aa).

Belongs to the PqqD family. In terms of assembly, monomer. Interacts with PqqE.

Its pathway is cofactor biosynthesis; pyrroloquinoline quinone biosynthesis. Its function is as follows. Functions as a PqqA binding protein and presents PqqA to PqqE, in the pyrroloquinoline quinone (PQQ) biosynthetic pathway. The chain is PqqA binding protein 1 (pqqD1) from Pseudomonas putida (strain ATCC 47054 / DSM 6125 / CFBP 8728 / NCIMB 11950 / KT2440).